The primary structure comprises 468 residues: Siroheme synthase (468 aa).

A precorrin-2 dehydrogenase /sirohydrochlorin ferrochelatase region spans residues 1-202 (MDYLPLFARL…EQHDSAEQWM (202 aa)). NAD(+) is bound by residues 22-23 (DI) and 43-44 (PS). Residue Ser-126 is modified to Phosphoserine. The tract at residues 214-468 (GEIVLVGAGP…SGKEHLINLA (255 aa)) is uroporphyrinogen-III C-methyltransferase. Pro-223 serves as a coordination point for S-adenosyl-L-methionine. Residue Asp-246 is the Proton acceptor of the active site. Lys-268 serves as the catalytic Proton donor. Residues 299–301 (GGD), 329–330 (TA), Met-381, and Gly-410 contribute to the S-adenosyl-L-methionine site.

It in the N-terminal section; belongs to the precorrin-2 dehydrogenase / sirohydrochlorin ferrochelatase family. This sequence in the C-terminal section; belongs to the precorrin methyltransferase family.

It catalyses the reaction uroporphyrinogen III + 2 S-adenosyl-L-methionine = precorrin-2 + 2 S-adenosyl-L-homocysteine + H(+). The catalysed reaction is precorrin-2 + NAD(+) = sirohydrochlorin + NADH + 2 H(+). The enzyme catalyses siroheme + 2 H(+) = sirohydrochlorin + Fe(2+). It functions in the pathway cofactor biosynthesis; adenosylcobalamin biosynthesis; precorrin-2 from uroporphyrinogen III: step 1/1. Its pathway is cofactor biosynthesis; adenosylcobalamin biosynthesis; sirohydrochlorin from precorrin-2: step 1/1. The protein operates within porphyrin-containing compound metabolism; siroheme biosynthesis; precorrin-2 from uroporphyrinogen III: step 1/1. It participates in porphyrin-containing compound metabolism; siroheme biosynthesis; siroheme from sirohydrochlorin: step 1/1. It functions in the pathway porphyrin-containing compound metabolism; siroheme biosynthesis; sirohydrochlorin from precorrin-2: step 1/1. Multifunctional enzyme that catalyzes the SAM-dependent methylations of uroporphyrinogen III at position C-2 and C-7 to form precorrin-2 via precorrin-1. Then it catalyzes the NAD-dependent ring dehydrogenation of precorrin-2 to yield sirohydrochlorin. Finally, it catalyzes the ferrochelation of sirohydrochlorin to yield siroheme. The polypeptide is Siroheme synthase (Tolumonas auensis (strain DSM 9187 / NBRC 110442 / TA 4)).